The primary structure comprises 303 residues: MTAVAIPAVRDYLTDLQGRIVAALEQAGGEAFRTDAWQRAEGGGGVSRLLEGGQLFERAGVLFSHVKGTRLPPSASAHRPELAGRGWEAMGVSMVLHPRNPYVPTTHMNVRMFVAAARPGHAESDVFWFGGGLDLTPYYPFEDDARHFHRACRDALDPHGADYYPRYKQWCDEYFFLKHRNETRGIGGIFFDDLNDPGFDASFALTRSVGDSFLPAYLPIVQARRDMPYGERERDFQAYRRGRYVEFNLVFDRGTLFGLQSGGRTESILLSMPPLAQWRYDWQPQAGTPEAALAEFLRPREWV.

Ser93 contributes to the substrate binding site. Residues His97 and His107 each contribute to the a divalent metal cation site. The Proton donor role is filled by His107. 109-111 (NVR) contributes to the substrate binding site. Residues His149 and His179 each coordinate a divalent metal cation. The segment at 244-279 (YVEFNLVFDRGTLFGLQSGGRTESILLSMPPLAQWR) is important for dimerization. 262–264 (GGR) provides a ligand contact to substrate.

It belongs to the aerobic coproporphyrinogen-III oxidase family. In terms of assembly, homodimer. A divalent metal cation is required as a cofactor.

Its subcellular location is the cytoplasm. It catalyses the reaction coproporphyrinogen III + O2 + 2 H(+) = protoporphyrinogen IX + 2 CO2 + 2 H2O. The protein operates within porphyrin-containing compound metabolism; protoporphyrin-IX biosynthesis; protoporphyrinogen-IX from coproporphyrinogen-III (O2 route): step 1/1. Functionally, involved in the heme biosynthesis. Catalyzes the aerobic oxidative decarboxylation of propionate groups of rings A and B of coproporphyrinogen-III to yield the vinyl groups in protoporphyrinogen-IX. The protein is Oxygen-dependent coproporphyrinogen-III oxidase of Bordetella parapertussis (strain 12822 / ATCC BAA-587 / NCTC 13253).